The chain runs to 218 residues: Large ribosomal subunit protein uL1 (218 aa).

It belongs to the universal ribosomal protein uL1 family. Part of the 50S ribosomal subunit.

Functionally, probably involved in E site tRNA release. Binds directly to 23S rRNA. In terms of biological role, protein L1 is also a translational repressor protein, it controls the translation of its operon by binding to its mRNA. This Saccharolobus solfataricus (strain ATCC 35092 / DSM 1617 / JCM 11322 / P2) (Sulfolobus solfataricus) protein is Large ribosomal subunit protein uL1.